The chain runs to 521 residues: UDP-N-acetylmuramoyl-L-alanyl-D-glutamate--2,6-diaminopimelate ligase (521 aa).

A UDP-N-acetyl-alpha-D-muramoyl-L-alanyl-D-glutamate-binding site is contributed by Ser33. Residue 116–122 coordinates ATP; it reads GTNGKTT. Residues 158–159, Ser185, Gln191, and Arg193 contribute to the UDP-N-acetyl-alpha-D-muramoyl-L-alanyl-D-glutamate site; that span reads TT. Lys225 is subject to N6-carboxylysine. Residues Arg409, 433–436, Gly483, and Glu487 each bind meso-2,6-diaminopimelate; that span reads DNPR. A Meso-diaminopimelate recognition motif motif is present at residues 433–436; it reads DNPR.

The protein belongs to the MurCDEF family. MurE subfamily. Mg(2+) serves as cofactor. Post-translationally, carboxylation is probably crucial for Mg(2+) binding and, consequently, for the gamma-phosphate positioning of ATP.

Its subcellular location is the cytoplasm. It catalyses the reaction UDP-N-acetyl-alpha-D-muramoyl-L-alanyl-D-glutamate + meso-2,6-diaminopimelate + ATP = UDP-N-acetyl-alpha-D-muramoyl-L-alanyl-gamma-D-glutamyl-meso-2,6-diaminopimelate + ADP + phosphate + H(+). It functions in the pathway cell wall biogenesis; peptidoglycan biosynthesis. Catalyzes the addition of meso-diaminopimelic acid to the nucleotide precursor UDP-N-acetylmuramoyl-L-alanyl-D-glutamate (UMAG) in the biosynthesis of bacterial cell-wall peptidoglycan. The protein is UDP-N-acetylmuramoyl-L-alanyl-D-glutamate--2,6-diaminopimelate ligase of Nitrosomonas europaea (strain ATCC 19718 / CIP 103999 / KCTC 2705 / NBRC 14298).